The chain runs to 357 residues: MAERSSEFVFTGNPARVIFGAGRMRNVREEVERLGRGRVLLLGSENLREVCDQVQDLLGELFVNRYDGAAMHTPVEVTDIALAQLRTSEADCVVAIGGGSTTGLAKALAARTGVDQVILPTTYAGSEVTPVLGETVEGRKTTRSTLAVLPETVIYDVELSKNLPVPIAVASAVNALAHAVEAMYSPDANPVVDTWALEAAQALARGLRGLVSDPSCRRIRTDLLRGSWLAGMCLGSVGMAVHHKLCHTLGGAFGLPHAPTHTVVLPYAMSFNASEVPDVMDSLASAMNVSNAPAGVWDLIADAGGPTSLASLGLLQTDLDRAADLATEAPYRNPRQITRSGIRDLLQSAWEGNRPPE.

The protein belongs to the iron-containing alcohol dehydrogenase family.

The catalysed reaction is 3-oxoadipate + NAD(+) = maleylacetate + NADH + H(+). The enzyme catalyses 3-oxoadipate + NADP(+) = maleylacetate + NADPH + H(+). It functions in the pathway aromatic compound metabolism; 3-chlorocatechol degradation. Functionally, plays a major role in the degradation of chloroaromatic compounds by channeling maleylacetate and some of its substituted derivatives into the 3-oxoadipate pathway. This enzyme converts maleylacetate and 2-chloromaleylacetate with similar efficiencies. The chain is Maleylacetate reductase 1 (macA) from Rhodococcus opacus (Nocardia opaca).